The following is a 669-amino-acid chain: RNA-binding protein 14 (669 aa).

RRM domains lie at 1–73 (MKIF…MSRP) and 79–149 (WKIF…LSTK). Residues lysine 126, lysine 135, lysine 138, lysine 149, and lysine 153 each participate in a glycyl lysine isopeptide (Lys-Gly) (interchain with G-Cter in SUMO2) cross-link. Disordered regions lie at residues 148 to 175 (TKGQ…DTAF) and 193 to 232 (NSTG…PLTA). Position 161 is a phosphoserine (serine 161). Lysine 164 carries the N6-acetyllysine; alternate modification. Lysine 164 is covalently cross-linked (Glycyl lysine isopeptide (Lys-Gly) (interchain with G-Cter in SUMO2); alternate). The residue at position 206 (threonine 206) is a Phosphothreonine. Phosphoserine occurs at positions 220, 242, 244, 256, 272, and 280. Residues 284 to 303 (PYRGQLASPSSQSAAASSLG) form a disordered region. A compositionally biased stretch (low complexity) spans 287 to 303 (GQLASPSSQSAAASSLG). Positions 307–354 (GAQPSASALSSYGGQPAAASSLNSYGAQGSSLASYGNQPSSYGAQAAS) are TRBP-interacting domain; interaction with STIL. Serine 520, serine 523, serine 527, and serine 562 each carry phosphoserine. The segment at 569 to 590 (ANSTPPPYERTRLSPPRASYDD) is disordered. Position 572 is a phosphothreonine (threonine 572). Serine 582 carries the phosphoserine modification. Residue lysine 600 forms a Glycyl lysine isopeptide (Lys-Gly) (interchain with G-Cter in SUMO2) linkage. Phosphoserine is present on residues serine 618, serine 620, serine 623, serine 627, serine 643, and serine 649.

Interacts with NCOA6, CITED1 and XRCC5/KU86. Interacts with SS18. Interacts with STIL and interferes with its interaction with CPAP. Interacts with gamma-tubulin. Part of the HDP-RNP complex composed of at least HEXIM1, PRKDC, XRCC5, XRCC6, paraspeckle proteins (SFPQ, NONO, PSPC1, RBM14, and MATR3) and NEAT1 RNA.

The protein resides in the nucleus. Its subcellular location is the nucleolus. The protein localises to the cytoplasm. May function as a nuclear receptor coactivator, enhancing transcription through other coactivators such as NCOA6 and CITED1. Regulates centriole biogenesis by suppressing the formation of aberrant centriolar protein complexes in the cytoplasm and thus preserving mitotic spindle integrity. Prevents the formation of the STIL-CPAP complex (which can induce the formation of aberrant centriolar protein complexes) by interfering with the interaction of STIL with CPAP. Plays a role in the regulation of DNA virus-mediated innate immune response by assembling into the HDP-RNP complex, a complex that serves as a platform for IRF3 phosphorylation and subsequent innate immune response activation through the cGAS-STING pathway. This Bos taurus (Bovine) protein is RNA-binding protein 14 (RBM14).